A 634-amino-acid polypeptide reads, in one-letter code: Replication protein E1 (634 aa).

Residues 85–87 (KRK) carry the Nuclear localization signal motif. A phosphoserine; by host mark is found at Ser-91 and Ser-95. The tract at residues 92–117 (PRSSPLGDITNQNNTHSHSQANESQV) is disordered. The segment covering 100-115 (ITNQNNTHSHSQANES) has biased composition (polar residues). A DNA-binding region region spans residues 172 to 338 (CANVELNSIC…QTQLQHSFED (167 aa)). An SF3 helicase domain is found at 437 to 587 (VNFMSFIQMF…FPFDNNGNAV (151 aa)). Residue 463-470 (GPPNTGKS) participates in ATP binding.

The protein belongs to the papillomaviridae E1 protein family. As to quaternary structure, can form hexamers. Interacts with E2 protein; this interaction increases E1 DNA binding specificity. Interacts with host DNA polymerase subunit POLA2. Interacts with host single stranded DNA-binding protein RPA1. Interacts with host TOP1; this interaction stimulates the enzymatic activity of TOP1. In terms of processing, phosphorylated.

The protein resides in the host nucleus. The enzyme catalyses Couples ATP hydrolysis with the unwinding of duplex DNA by translocating in the 3'-5' direction.. It catalyses the reaction ATP + H2O = ADP + phosphate + H(+). In terms of biological role, ATP-dependent DNA 3'-5' helicase required for initiation of viral DNA replication. It forms a complex with the viral E2 protein. The E1-E2 complex binds to the replication origin which contains binding sites for both proteins. During the initial step, a dimer of E1 interacts with a dimer of protein E2 leading to a complex that binds the viral origin of replication with high specificity. Then, a second dimer of E1 displaces the E2 dimer in an ATP-dependent manner to form the E1 tetramer. Following this, two E1 monomers are added to each half of the site, which results in the formation of two E1 trimers on the viral ori. Subsequently, two hexamers will be created. The double hexamer acts as a bi-directional helicase machinery and unwinds the viral DNA and then recruits the host DNA polymerase to start replication. This Homo sapiens (Human) protein is Replication protein E1.